Consider the following 132-residue polypeptide: MTSDVIANMITSIRNANLRKIKVIELPATKITKSIGKILLQEGFIDNLREREENNKNFLILTLRSQRRKHKASITTIRRISKPGLRIYSNHQEIPKVLGGIGIVILSTSQGIMSDRQARQNRIGGEILCYIW.

Belongs to the universal ribosomal protein uS8 family. In terms of assembly, part of the 30S ribosomal subunit.

Its subcellular location is the plastid. It localises to the chloroplast. Its function is as follows. One of the primary rRNA binding proteins, it binds directly to 16S rRNA central domain where it helps coordinate assembly of the platform of the 30S subunit. This chain is Small ribosomal subunit protein uS8c (rps8), found in Chaetosphaeridium globosum (Charophycean green alga).